The chain runs to 495 residues: ATP synthase subunit beta, chloroplastic (495 aa).

Position 172–179 (172–179 (GGAGVGKT)) interacts with ATP.

Belongs to the ATPase alpha/beta chains family. F-type ATPases have 2 components, CF(1) - the catalytic core - and CF(0) - the membrane proton channel. CF(1) has five subunits: alpha(3), beta(3), gamma(1), delta(1), epsilon(1). CF(0) has four main subunits: a(1), b(1), b'(1) and c(9-12).

It localises to the plastid. The protein resides in the chloroplast thylakoid membrane. The catalysed reaction is ATP + H2O + 4 H(+)(in) = ADP + phosphate + 5 H(+)(out). Produces ATP from ADP in the presence of a proton gradient across the membrane. The catalytic sites are hosted primarily by the beta subunits. The protein is ATP synthase subunit beta, chloroplastic of Scilla messeniaca (Greek squill).